A 233-amino-acid polypeptide reads, in one-letter code: Inner kinetochore subunit fta4 (233 aa).

Thr-189 and Thr-191 each carry phosphothreonine.

Belongs to the NKP1 family. As to quaternary structure, component of the inner kinetochore constitutive centromere-associated network (CCAN) (also known as central kinetochore Sim4 complex in fission yeast), which is composed of at least cnl2, cnp3, cnp20, fta1, fta2, fta3, fta4, fta6, fta7, mal2, mhf1, mhf2, mis6, mis15, mis17, sim4 and wip1.

It localises to the nucleus. The protein resides in the chromosome. Its subcellular location is the centromere. The protein localises to the kinetochore. Component of the kinetochore, a multiprotein complex that assembles on centromeric DNA and attaches chromosomes to spindle microtubules, mediating chromosome segregation and sister chromatid segregation during meiosis and mitosis. Component of the inner kinetochore constitutive centromere-associated network (CCAN), which serves as a structural platform for outer kinetochore assembly. Fta2, fta3 and fta4 associate with the central core (cnt) and inner repeat (inr) region of the centromere. The sequence is that of Inner kinetochore subunit fta4 (fta4) from Schizosaccharomyces pombe (strain 972 / ATCC 24843) (Fission yeast).